Here is a 228-residue protein sequence, read N- to C-terminus: Early nodulin-like protein 18 (228 aa).

The signal sequence occupies residues 1–26; sequence MSPSCSSCVNVLLIMCLMLLSLSADA. Positions 28–148 constitute a Phytocyanin domain; the sequence is KNYTVGESTG…GQHFMINVTH (121 aa). Residues N29, N71, N94, and N145 are each glycosylated (N-linked (GlcNAc...) asparagine). An intrachain disulfide couples C86 to C136. Residues 148–211 form a disordered region; sequence HGQGLPDSSS…VHSKKSSSST (64 aa). Positions 153 to 170 are enriched in low complexity; the sequence is PDSSSPDDAAAPGPSESS. The segment covering 188–204 has biased composition (basic and acidic residues); it reads DHPKDIESADDDKEVHS. The GPI-anchor amidated serine moiety is linked to residue S204. Positions 205–228 are cleaved as a propeptide — removed in mature form; it reads KKSSSSTTKTSLFCFVFMGLFASF.

Belongs to the early nodulin-like (ENODL) family. In terms of tissue distribution, mostly expressed in seedlings, roots and flowers, and, to a lower extent, in leaves, stems and seeds.

The protein localises to the cell membrane. In terms of biological role, may act as a carbohydrate transporter. This Arabidopsis thaliana (Mouse-ear cress) protein is Early nodulin-like protein 18.